We begin with the raw amino-acid sequence, 558 residues long: 5-aminolevulinate synthase, mitochondrial (558 aa).

The transit peptide at 1–25 (MERVVKLAAKHCPFVSKADPSALRR) directs the protein to the mitochondrion. Residues 103-124 (TTTPVTKKHQMPKHYASDLNGV) are disordered. Substrate contacts are provided by Arg-152, Ser-265, and Lys-284. Ser-317, His-345, and Thr-374 together coordinate pyridoxal 5'-phosphate. The active site involves Lys-377. Position 377 is an N6-(pyridoxal phosphate)lysine (Lys-377). Pyridoxal 5'-phosphate-binding residues include Thr-406 and Thr-407. Position 492 (Thr-492) interacts with substrate.

Belongs to the class-II pyridoxal-phosphate-dependent aminotransferase family. Homodimer. It depends on pyridoxal 5'-phosphate as a cofactor.

Its subcellular location is the mitochondrion matrix. The catalysed reaction is succinyl-CoA + glycine + H(+) = 5-aminolevulinate + CO2 + CoA. It functions in the pathway porphyrin-containing compound metabolism; protoporphyrin-IX biosynthesis; 5-aminolevulinate from glycine: step 1/1. Catalyzes the synthesis of 5-aminolevulinate (ALA) from succinyl-CoA and glycine, the first and rate-limiting step in heme biosynthesis. The protein is 5-aminolevulinate synthase, mitochondrial of Schizosaccharomyces pombe (strain 972 / ATCC 24843) (Fission yeast).